Reading from the N-terminus, the 98-residue chain is MSRTCELTAKAVQTGNNVSHANNKTKRRFLPNLVNVTLISEALNQNVRLRISANALRSVEHRGGLDAFLAKADVKELSQRARLLKKQIAKKLAEQVAA.

Belongs to the bacterial ribosomal protein bL28 family.

This Mesorhizobium japonicum (strain LMG 29417 / CECT 9101 / MAFF 303099) (Mesorhizobium loti (strain MAFF 303099)) protein is Large ribosomal subunit protein bL28.